A 160-amino-acid polypeptide reads, in one-letter code: MFRGNFETSIDAKGRTSLPAKFREVLVDSFGDERFFMTNSNPVRLGDGGYSSGLVIYPYNEWLALEEKLKVGTGLGLSSAELASVKRRIVAPAVECVADKLGRILVPPHLRKSACLEREILFVGMLNKAEIWSQAEWEKVFRQDIENFPIDSPVLAELGL.

2 SpoVT-AbrB domains span residues 5–50 (NFET…DGGY) and 93–136 (AVEC…SQAE).

This sequence belongs to the MraZ family. As to quaternary structure, forms oligomers.

The protein localises to the cytoplasm. It is found in the nucleoid. The polypeptide is Transcriptional regulator MraZ (Geotalea daltonii (strain DSM 22248 / JCM 15807 / FRC-32) (Geobacter daltonii)).